The sequence spans 103 residues: Photosystem II 5 kDa protein, chloroplastic (103 aa).

A chloroplast-targeting transit peptide spans 1–75; that stretch reads MASMTMTATF…LAKVAMAEEE (75 aa).

Post-translationally, the maturation of the PSII-T precursor to its final form occurs through a two step process. First, a stromal intermediate is formed, which, upon translocation into the thylakoid membrane, is processed to the mature protein.

It localises to the plastid. The protein localises to the chloroplast thylakoid membrane. Its function is as follows. May be a component of the oxygen-evolving complex. This is Photosystem II 5 kDa protein, chloroplastic (PSBT) from Arabidopsis thaliana (Mouse-ear cress).